Here is a 411-residue protein sequence, read N- to C-terminus: Squalene synthase (411 aa).

NADP(+) is bound by residues arginine 49 and arginine 74. Residues aspartate 77, glutamate 80, and aspartate 81 each coordinate Mg(2+). Positions 212, 312, and 314 each coordinate NADP(+). The helical transmembrane segment at 388–408 threads the bilayer; the sequence is SPVLIVVIFIILAIILAQLFG.

This sequence belongs to the phytoene/squalene synthase family. Mg(2+) serves as cofactor.

The protein localises to the membrane. It carries out the reaction 2 (2E,6E)-farnesyl diphosphate + NADH + H(+) = squalene + 2 diphosphate + NAD(+). It catalyses the reaction 2 (2E,6E)-farnesyl diphosphate + NADPH + H(+) = squalene + 2 diphosphate + NADP(+). In terms of biological role, converts farnesyl diphosphate (FPP) into squalene, a precursor for sterol biosynthesis in eukaryotes. This Solanum lycopersicum (Tomato) protein is Squalene synthase.